The sequence spans 43 residues: Myotoxin-1 (43 aa).

Cystine bridges form between Cys-4–Cys-36, Cys-11–Cys-30, and Cys-18–Cys-37.

It belongs to the crotamine-myotoxin family. In terms of assembly, monomer. Expressed by the venom gland.

It localises to the secreted. Functionally, cationic peptide that possesses multiple functions. It acts as a cell-penetrating peptide (CPP), and as a potent voltage-gated potassium channel (Kv) inhibitor. It exhibits antimicrobial activities, hind limb paralysis, and severe muscle necrosis by a non-enzymatic mechanism. The sequence is that of Myotoxin-1 from Crotalus concolor (Midget faded rattlesnake).